An 86-amino-acid polypeptide reads, in one-letter code: Large ribosomal subunit protein uL23 (86 aa).

This sequence belongs to the universal ribosomal protein uL23 family. Part of the 50S ribosomal subunit. Contacts protein L29.

Binds to 23S rRNA. One of the proteins that surrounds the polypeptide exit tunnel on the outside of the ribosome. This is Large ribosomal subunit protein uL23 from Methanococcus vannielii (strain ATCC 35089 / DSM 1224 / JCM 13029 / OCM 148 / SB).